The chain runs to 125 residues: MIEQPRICVQVQSIYVETQSIPEEERFVFAYTVTVRNLGRSNVQLLGRYWLITNSNGRQTEVQGEGVIGEQPLILPGNEFQYTSGAVLETPLGTMEGHYEMIDHLGQAFRTVIPVFRLAIPALIH.

The ApaG domain occupies 1–125 (MIEQPRICVQ…FRLAIPALIH (125 aa)).

The chain is Protein ApaG from Yersinia pseudotuberculosis serotype IB (strain PB1/+).